The following is a 361-amino-acid chain: Peptide chain release factor 1 (361 aa).

Position 237 is an N5-methylglutamine (Gln-237). Residues 285–296 (DEKRRSAEESTR) are compositionally biased toward basic and acidic residues. A disordered region spans residues 285 to 305 (DEKRRSAEESTRRNLVGSGDR).

It belongs to the prokaryotic/mitochondrial release factor family. Post-translationally, methylated by PrmC. Methylation increases the termination efficiency of RF1.

It is found in the cytoplasm. In terms of biological role, peptide chain release factor 1 directs the termination of translation in response to the peptide chain termination codons UAG and UAA. In Shewanella sediminis (strain HAW-EB3), this protein is Peptide chain release factor 1.